We begin with the raw amino-acid sequence, 378 residues long: Squalene methyltransferase 1 (378 aa).

A helical membrane pass occupies residues 17-37 (LLTWKGVAGLVVAITLGYLII).

It belongs to the class I-like SAM-binding methyltransferase superfamily. Erg6/SMT family.

It is found in the microsome membrane. The catalysed reaction is squalene + 2 S-adenosyl-L-methionine = 3,22-dimethyl-1,2,23,24-tetradehydro-2,3,22,23-tetrahydrosqualene + 2 S-adenosyl-L-homocysteine + 2 H(+). Its function is as follows. Converts squalene to mono- and dimethyl derivatives, but not to tri- and tetramethylated products. Unable to methylate cycloartenol, zymosterol or lanosterol. Methylates both C-3 and C22 positions, but only C-3 position in monomethylated products. Produces mainly dimethylated squalene. This is Squalene methyltransferase 1 (TMT-1) from Botryococcus braunii (Green alga).